A 107-amino-acid chain; its full sequence is Ferredoxin-1 (107 aa).

2 consecutive 4Fe-4S ferredoxin-type domains span residues 2-30 (AFVV…YEGP) and 31-60 (NFLV…SEDE). [3Fe-4S] cluster is bound by residues cysteine 9 and cysteine 17. [4Fe-4S] cluster is bound by residues cysteine 21, cysteine 40, cysteine 43, and cysteine 46. Residue cysteine 50 coordinates [3Fe-4S] cluster. Residues 84–107 (EKKDPLPDAEDWDGVKGKLQHLER) are disordered. The span at 96 to 107 (DGVKGKLQHLER) shows a compositional bias: basic and acidic residues.

The cofactor is [4Fe-4S] cluster. It depends on [3Fe-4S] cluster as a cofactor.

In terms of biological role, ferredoxins are iron-sulfur proteins that transfer electrons in a wide variety of metabolic reactions. This ferredoxin could play a role in regulating gene expression by interacting directly with DNA. The polypeptide is Ferredoxin-1 (fdxA) (Azotobacter vinelandii).